Here is a 180-residue protein sequence, read N- to C-terminus: MSNGIVAKRYAVALFKIAKEKHVLEMFEEELRLVQNVYEKNGELHSFLTQPNISKEQKKTFLANVFGSVSESILNTLYILIDNKRIDILSDIANEYVVLANEERNVADATVYSTRLLSEEEKLNIAEAFAKRTGKDAIRVKNVVDEDLLGGIKVRIGNRIYDGSLQGKLARIQRELMKNR.

Belongs to the ATPase delta chain family. As to quaternary structure, F-type ATPases have 2 components, F(1) - the catalytic core - and F(0) - the membrane proton channel. F(1) has five subunits: alpha(3), beta(3), gamma(1), delta(1), epsilon(1). F(0) has three main subunits: a(1), b(2) and c(10-14). The alpha and beta chains form an alternating ring which encloses part of the gamma chain. F(1) is attached to F(0) by a central stalk formed by the gamma and epsilon chains, while a peripheral stalk is formed by the delta and b chains.

Its subcellular location is the cell membrane. Functionally, f(1)F(0) ATP synthase produces ATP from ADP in the presence of a proton or sodium gradient. F-type ATPases consist of two structural domains, F(1) containing the extramembraneous catalytic core and F(0) containing the membrane proton channel, linked together by a central stalk and a peripheral stalk. During catalysis, ATP synthesis in the catalytic domain of F(1) is coupled via a rotary mechanism of the central stalk subunits to proton translocation. Its function is as follows. This protein is part of the stalk that links CF(0) to CF(1). It either transmits conformational changes from CF(0) to CF(1) or is implicated in proton conduction. In Bacillus cereus (strain 03BB102), this protein is ATP synthase subunit delta.